Here is a 349-residue protein sequence, read N- to C-terminus: Alanine racemase (349 aa).

Catalysis depends on Lys35, which acts as the Proton acceptor; specific for D-alanine. Lys35 carries the post-translational modification N6-(pyridoxal phosphate)lysine. Substrate is bound at residue Arg130. Catalysis depends on Tyr244, which acts as the Proton acceptor; specific for L-alanine. Met292 is a binding site for substrate.

This sequence belongs to the alanine racemase family. The cofactor is pyridoxal 5'-phosphate.

The catalysed reaction is L-alanine = D-alanine. It participates in amino-acid biosynthesis; D-alanine biosynthesis; D-alanine from L-alanine: step 1/1. Its function is as follows. Catalyzes the interconversion of L-alanine and D-alanine. May also act on other amino acids. The protein is Alanine racemase (alr) of Cereibacter sphaeroides (strain ATCC 17023 / DSM 158 / JCM 6121 / CCUG 31486 / LMG 2827 / NBRC 12203 / NCIMB 8253 / ATH 2.4.1.) (Rhodobacter sphaeroides).